The primary structure comprises 265 residues: Regulator of calcineurin 2 (265 aa).

2 positions are modified to phosphoserine: Ser104 and Ser110. Disordered regions lie at residues 127-213 and 242-265; these read LLSI…DKSA and ENDV…EFFH. At Thr132 the chain carries Phosphothreonine. 2 stretches are compositionally biased toward low complexity: residues 141–161 and 182–202; these read SSSL…LESP and LSRS…QTSL. 8 positions are modified to phosphoserine: Ser152, Ser157, Ser160, Ser183, Ser187, Ser193, Ser201, and Ser255.

In terms of processing, phosphorylation of Ser-152 and Ser-160 is induced 2-fold in response to mating pheromone.

The protein localises to the cytoplasm. The polypeptide is Regulator of calcineurin 2 (RCN2) (Saccharomyces cerevisiae (strain ATCC 204508 / S288c) (Baker's yeast)).